We begin with the raw amino-acid sequence, 633 residues long: Probable potassium transport system protein Kup (633 aa).

The next 12 helical transmembrane spans lie at 19–39, 61–81, 112–132, 148–168, 179–199, 217–237, 258–278, 290–310, 348–368, 380–400, 405–425, and 430–450; these read LGMLVAAVGVVYGDIGTSPLY, ILALIFWSLVWVVSIKYVLFI, VLVILGLIGASLFYGDSMITP, SGLEHWVVPLALVVLVALFLI, LFGPVMVAWFLVLGGLGINGI, FFIVHPGMGVAILGAVVLALT, WFALVLPALVLNYFGQGALLL, LLAPGWALIPLVVLATLATVI, IYIGAVNWSLMVGVILLVLGF, VAVTGTMLITSILVAAVMLLL, PVLAVPVLLGFLLVDGLFFAA, and IFQGGAFPVLAGIVLFILMTT.

Belongs to the HAK/KUP transporter (TC 2.A.72) family.

The protein localises to the cell inner membrane. The catalysed reaction is K(+)(in) + H(+)(in) = K(+)(out) + H(+)(out). Transport of potassium into the cell. Likely operates as a K(+):H(+) symporter. The sequence is that of Probable potassium transport system protein Kup from Pseudomonas fluorescens (strain ATCC BAA-477 / NRRL B-23932 / Pf-5).